The primary structure comprises 1379 residues: DNA-directed RNA polymerase subunit beta'' (1379 aa).

Zn(2+)-binding residues include cysteine 220, cysteine 291, cysteine 298, and cysteine 301.

Belongs to the RNA polymerase beta' chain family. RpoC2 subfamily. In terms of assembly, in plastids the minimal PEP RNA polymerase catalytic core is composed of four subunits: alpha, beta, beta', and beta''. When a (nuclear-encoded) sigma factor is associated with the core the holoenzyme is formed, which can initiate transcription. It depends on Zn(2+) as a cofactor.

It localises to the plastid. It carries out the reaction RNA(n) + a ribonucleoside 5'-triphosphate = RNA(n+1) + diphosphate. In terms of biological role, DNA-dependent RNA polymerase catalyzes the transcription of DNA into RNA using the four ribonucleoside triphosphates as substrates. The chain is DNA-directed RNA polymerase subunit beta'' from Cuscuta reflexa (Southern Asian dodder).